We begin with the raw amino-acid sequence, 321 residues long: Olfactory receptor 5K4 (321 aa).

Residues 1–25 (MARENHSLAAEFILIGFTNYPELKT) lie on the Extracellular side of the membrane. Asparagine 5 carries N-linked (GlcNAc...) asparagine glycosylation. Residues 26–46 (LLFVVFSAIYLVTMVGNLGLV) traverse the membrane as a helical segment. The Cytoplasmic portion of the chain corresponds to 47 to 54 (ALIYVERR). Residues 55 to 75 (LLTPMYIFLGNLALMDSCCSC) form a helical membrane-spanning segment. Topologically, residues 76-97 (AVTPKMLENFFSEDRIISLYEC) are extracellular. A disulfide bond links cysteine 97 and cysteine 179. The chain crosses the membrane as a helical span at residues 98–118 (MAQFYFLCLAETTDCFLLATM). At 119–139 (AYDRYVAICHPLQYHTMMSKT) the chain is on the cytoplasmic side. Residues 140–160 (LCIRMTTGAFKAGNLHSMIHV) traverse the membrane as a helical segment. Residues 161-205 (GLLLRLTFCRSNKIHHFFCDILPLYRLSCTDPSINELMIYIFSIP) are Extracellular-facing. A helical membrane pass occupies residues 206-226 (IQIFTIATVLISYLCILLTVF). Residues 227–240 (KMKSKEGRGKAFST) lie on the Cytoplasmic side of the membrane. The chain crosses the membrane as a helical span at residues 241 to 261 (CASHFLSVSIFYICLLMYIGP). Residues 262–268 (SEEGDKD) are Extracellular-facing. The chain crosses the membrane as a helical span at residues 269–289 (TPVAIFYAIVIPLLNPFIYSL). The Cytoplasmic portion of the chain corresponds to 290–321 (RNKEVINVLKKIMRNYNILKQTCSIANLFLIY).

The protein belongs to the G-protein coupled receptor 1 family.

The protein resides in the cell membrane. Functionally, odorant receptor. The sequence is that of Olfactory receptor 5K4 (OR5K4) from Homo sapiens (Human).